The sequence spans 448 residues: tRNA(Ile)-lysidine synthase (448 aa).

25–30 is a binding site for ATP; sequence SGGSDS.

The protein belongs to the tRNA(Ile)-lysidine synthase family.

It localises to the cytoplasm. The catalysed reaction is cytidine(34) in tRNA(Ile2) + L-lysine + ATP = lysidine(34) in tRNA(Ile2) + AMP + diphosphate + H(+). Functionally, ligates lysine onto the cytidine present at position 34 of the AUA codon-specific tRNA(Ile) that contains the anticodon CAU, in an ATP-dependent manner. Cytidine is converted to lysidine, thus changing the amino acid specificity of the tRNA from methionine to isoleucine. The chain is tRNA(Ile)-lysidine synthase from Brucella suis biovar 1 (strain 1330).